We begin with the raw amino-acid sequence, 333 residues long: DNA-directed RNA polymerase subunit alpha (333 aa).

The segment at 1–233 (MVREKVKVST…NLFIPFLHVE (233 aa)) is alpha N-terminal domain (alpha-NTD). An alpha C-terminal domain (alpha-CTD) region spans residues 267–333 (LVFQYIFIDQ…LEKNRKFISN (67 aa)).

The protein belongs to the RNA polymerase alpha chain family. As to quaternary structure, in plastids the minimal PEP RNA polymerase catalytic core is composed of four subunits: alpha, beta, beta', and beta''. When a (nuclear-encoded) sigma factor is associated with the core the holoenzyme is formed, which can initiate transcription.

Its subcellular location is the plastid. The protein resides in the chloroplast. The catalysed reaction is RNA(n) + a ribonucleoside 5'-triphosphate = RNA(n+1) + diphosphate. DNA-dependent RNA polymerase catalyzes the transcription of DNA into RNA using the four ribonucleoside triphosphates as substrates. This Aethionema grandiflorum (Persian stone-cress) protein is DNA-directed RNA polymerase subunit alpha.